The sequence spans 251 residues: Transcriptional regulator CBF1 (251 aa).

Positions 1–169 (MVKSHKRTLE…VERKRRESIN (169 aa)) are disordered. The segment covering 7–28 (RTLEKDEEHQEKKKANKISKDD) has biased composition (basic and acidic residues). The span at 40-56 (ASDSAHTDTATAAVAAV) shows a compositional bias: low complexity. Residues 67–76 (TESSTNQTSA) show a composition bias toward polar residues. Residues 77–105 (LDKDDKETKDNLNPREETQSSHQEIDIPK) show a composition bias toward basic and acidic residues. Polar residues predominate over residues 107-116 (QLTNQQNLAD). The span at 117 to 126 (QHQQYQYHQQ) shows a compositional bias: low complexity. The segment covering 127–140 (LAQTNFKTEPTNSA) has biased composition (polar residues). Positions 144-167 (HGSEEWHRQRRENHKEVERKRRES) are enriched in basic and acidic residues. Residues 152–200 (QRRENHKEVERKRRESINTGIRELARLIPTTDTNKAQILQRAVEYIKRL) enclose the bHLH domain. Positions 190–223 (LQRAVEYIKRLKENENNNIEKWTLEKLLTEQAVS) form a coiled coil.

It localises to the nucleus. Transcription factor that binds ribosomal protein gene promoters and rDNA locus with TBF1. Necessary for the expression of genes involved in assimilation of inorganic sulfate. Also required for the expression of respiratory genes and glycolytic genes. Does not bind to centromeres and is not necessary for efficient chromosome segregationas as does S.cerevisiae CBF1. This chain is Transcriptional regulator CBF1 (CBF1), found in Candida albicans (strain SC5314 / ATCC MYA-2876) (Yeast).